The sequence spans 251 residues: Aspartate/glutamate leucyltransferase (251 aa).

It belongs to the R-transferase family. Bpt subfamily.

The protein resides in the cytoplasm. The catalysed reaction is N-terminal L-glutamyl-[protein] + L-leucyl-tRNA(Leu) = N-terminal L-leucyl-L-glutamyl-[protein] + tRNA(Leu) + H(+). It catalyses the reaction N-terminal L-aspartyl-[protein] + L-leucyl-tRNA(Leu) = N-terminal L-leucyl-L-aspartyl-[protein] + tRNA(Leu) + H(+). Functions in the N-end rule pathway of protein degradation where it conjugates Leu from its aminoacyl-tRNA to the N-termini of proteins containing an N-terminal aspartate or glutamate. This is Aspartate/glutamate leucyltransferase from Xanthomonas oryzae pv. oryzae (strain KACC10331 / KXO85).